Consider the following 210-residue polypeptide: Vacuolar protein sorting-associated protein 2 homolog 3 (210 aa).

The interval 1 to 23 is disordered; sequence MNIFTKKPNPREVLRESKREMTQ. The segment covering 9 to 23 has biased composition (basic and acidic residues); sequence NPREVLRESKREMTQ. Positions 28 to 84 form a coiled coil; that stretch reads IEKEIGSLQSEEKKLVLEIKRTAKSGNEGATKILARQLIRLRQQIANLQGSRAQMRG. The disordered stretch occupies residues 178 to 200; that stretch reads LSSAPKGKIGGKKAEDVGSSGID.

This sequence belongs to the SNF7 family. As to quaternary structure, component of the endosomal sorting required for transport complex III (ESCRT-III), composed at least of VPS2, VPS20, VPS24 and VPS32.

It is found in the endosome. Its function is as follows. Component of the ESCRT-III complex, which is required for multivesicular bodies (MVBs) formation and sorting of endosomal cargo proteins into MVBs. The ESCRT-III complex is probably involved in the concentration of MVB cargo. The polypeptide is Vacuolar protein sorting-associated protein 2 homolog 3 (VPS2.3) (Arabidopsis thaliana (Mouse-ear cress)).